A 265-amino-acid polypeptide reads, in one-letter code: Indole-3-glycerol phosphate synthase (265 aa).

This sequence belongs to the TrpC family.

The enzyme catalyses 1-(2-carboxyphenylamino)-1-deoxy-D-ribulose 5-phosphate + H(+) = (1S,2R)-1-C-(indol-3-yl)glycerol 3-phosphate + CO2 + H2O. The protein operates within amino-acid biosynthesis; L-tryptophan biosynthesis; L-tryptophan from chorismate: step 4/5. In Hyphomonas neptunium (strain ATCC 15444), this protein is Indole-3-glycerol phosphate synthase.